The sequence spans 83 residues: Defensin-2 (83 aa).

Positions 1–33 (MAGKGVGTPLSALFLLVLLVVTIGMMEVQVAEG) are cleaved as a signal peptide. Intrachain disulfides connect Cys36-Cys82, Cys47-Cys67, Cys53-Cys76, and Cys57-Cys78.

The protein belongs to the DEFL family.

It localises to the secreted. Its function is as follows. Plant defense peptide. Has antifungal activity. This chain is Defensin-2, found in Pinus sylvestris (Scotch pine).